We begin with the raw amino-acid sequence, 140 residues long: Putative pre-16S rRNA nuclease (140 aa).

This sequence belongs to the YqgF nuclease family.

The protein resides in the cytoplasm. In terms of biological role, could be a nuclease involved in processing of the 5'-end of pre-16S rRNA. The chain is Putative pre-16S rRNA nuclease from Aeromonas hydrophila.